The following is a 466-amino-acid chain: ATP synthase subunit beta (466 aa).

148–155 (GGAGVGKT) contacts ATP.

This sequence belongs to the ATPase alpha/beta chains family. In terms of assembly, F-type ATPases have 2 components, CF(1) - the catalytic core - and CF(0) - the membrane proton channel. CF(1) has five subunits: alpha(3), beta(3), gamma(1), delta(1), epsilon(1). CF(0) has three main subunits: a(1), b(2) and c(9-12). The alpha and beta chains form an alternating ring which encloses part of the gamma chain. CF(1) is attached to CF(0) by a central stalk formed by the gamma and epsilon chains, while a peripheral stalk is formed by the delta and b chains.

Its subcellular location is the cell inner membrane. The catalysed reaction is ATP + H2O + 4 H(+)(in) = ADP + phosphate + 5 H(+)(out). Functionally, produces ATP from ADP in the presence of a proton gradient across the membrane. The catalytic sites are hosted primarily by the beta subunits. The polypeptide is ATP synthase subunit beta (Xylella fastidiosa (strain M23)).